The chain runs to 546 residues: Thermolysin (546 aa).

The signal sequence occupies residues 1 to 25 (MNKRAMLGAIGLAFGLMAWPFGASA). A propeptide spans 26 to 228 (KEKSMVWNEQ…EAKPGGGQPV (203 aa)) (activation peptide). Residues Asp-287, Asp-289, Gln-291, and Asp-368 each coordinate Ca(2+). His-372 provides a ligand contact to Zn(2+). Glu-373 is an active-site residue. Positions 376 and 396 each coordinate Zn(2+). Positions 407, 413, 415, 417, 420, 423, 424, 427, and 430 each coordinate Ca(2+). His-461 (proton donor) is an active-site residue.

The protein belongs to the peptidase M4 family. Ca(2+) is required as a cofactor. It depends on Zn(2+) as a cofactor.

The protein localises to the secreted. It catalyses the reaction Preferential cleavage: Xaa-|-Leu &gt; Xaa-|-Phe.. Its function is as follows. Extracellular zinc metalloprotease. The polypeptide is Thermolysin (Alicyclobacillus acidocaldarius subsp. acidocaldarius (Bacillus acidocaldarius)).